The primary structure comprises 309 residues: Ribosomal protein L11 methyltransferase (309 aa).

S-adenosyl-L-methionine-binding residues include T160, G181, D203, and N245.

The protein belongs to the methyltransferase superfamily. PrmA family.

The protein resides in the cytoplasm. It carries out the reaction L-lysyl-[protein] + 3 S-adenosyl-L-methionine = N(6),N(6),N(6)-trimethyl-L-lysyl-[protein] + 3 S-adenosyl-L-homocysteine + 3 H(+). Its function is as follows. Methylates ribosomal protein L11. The sequence is that of Ribosomal protein L11 methyltransferase from Caldanaerobacter subterraneus subsp. tengcongensis (strain DSM 15242 / JCM 11007 / NBRC 100824 / MB4) (Thermoanaerobacter tengcongensis).